Here is a 486-residue protein sequence, read N- to C-terminus: Kynurenine 3-monooxygenase (486 aa).

The next 2 helical transmembrane spans lie at leucine 401–tyrosine 424 and isoleucine 437–arginine 459.

This sequence belongs to the aromatic-ring hydroxylase family. KMO subfamily. FAD is required as a cofactor.

The protein localises to the mitochondrion. The protein resides in the membrane. The catalysed reaction is L-kynurenine + NADPH + O2 + H(+) = 3-hydroxy-L-kynurenine + NADP(+) + H2O. Its pathway is cofactor biosynthesis; NAD(+) biosynthesis; quinolinate from L-kynurenine: step 1/3. Catalyzes the hydroxylation of L-kynurenine (L-Kyn) to form 3-hydroxy-L-kynurenine (L-3OHKyn). Required for synthesis of quinolinic acid. The chain is Kynurenine 3-monooxygenase (kh) from Anopheles gambiae (African malaria mosquito).